A 277-amino-acid chain; its full sequence is Photosystem I assembly factor PSA3, chloroplastic (277 aa).

The N-terminal 45 residues, 1–45, are a transit peptide targeting the chloroplast; the sequence is MVVVTHISTSFHQISPSFFHLRLRNPSTTSSSRPKLDGGFALSIR.

Interacts with PYG7.

The protein resides in the plastid. It localises to the chloroplast. The protein localises to the chloroplast thylakoid membrane. Its function is as follows. Nuclear genome-encoded factor required for the accumulation of photosystem I (PSI). Functions as a PSI biogenesis factor. Cooperates with PYG7 to promote the stable assembly of PSI in the thylakoid membrane. May target primarily the PsaC subunit. Does not seem to be required for the expression of chloroplast genes encoding PSI subunits. In Arabidopsis thaliana (Mouse-ear cress), this protein is Photosystem I assembly factor PSA3, chloroplastic.